Here is a 256-residue protein sequence, read N- to C-terminus: Thiazole synthase (256 aa).

The active-site Schiff-base intermediate with DXP is the K95. Residues G156, A182–G183, and N204–T205 each bind 1-deoxy-D-xylulose 5-phosphate.

Belongs to the ThiG family. Homotetramer. Forms heterodimers with either ThiH or ThiS.

Its subcellular location is the cytoplasm. The catalysed reaction is [ThiS sulfur-carrier protein]-C-terminal-Gly-aminoethanethioate + 2-iminoacetate + 1-deoxy-D-xylulose 5-phosphate = [ThiS sulfur-carrier protein]-C-terminal Gly-Gly + 2-[(2R,5Z)-2-carboxy-4-methylthiazol-5(2H)-ylidene]ethyl phosphate + 2 H2O + H(+). It participates in cofactor biosynthesis; thiamine diphosphate biosynthesis. In terms of biological role, catalyzes the rearrangement of 1-deoxy-D-xylulose 5-phosphate (DXP) to produce the thiazole phosphate moiety of thiamine. Sulfur is provided by the thiocarboxylate moiety of the carrier protein ThiS. In vitro, sulfur can be provided by H(2)S. The polypeptide is Thiazole synthase (Salmonella paratyphi A (strain ATCC 9150 / SARB42)).